Here is a 1192-residue protein sequence, read N- to C-terminus: DNA topoisomerase 2 (1192 aa).

Residues N64, N95, and 142–149 (GTNGVGLK) each bind ATP. 3 residues coordinate Mg(2+): E438, D539, and D541. The 468-residue stretch at 707 to 1174 (IPNFLDGMTR…PGASVWLEEI (468 aa)) folds into the Topo IIA-type catalytic domain. The active-site O-(5'-phospho-DNA)-tyrosine intermediate is Y800.

It belongs to the type II topoisomerase family. Requires Mg(2+) as cofactor. Mn(2+) is required as a cofactor. The cofactor is Ca(2+).

The protein resides in the host cytoplasm. It carries out the reaction ATP-dependent breakage, passage and rejoining of double-stranded DNA.. Functionally, type II topoisomerase. Processively relaxes supercoiled DNA. Displays DNA-supercoiling activity only when associated with the viral histone-like protein. This is DNA topoisomerase 2 (TOP) from African swine fever virus (strain Badajoz 1971 Vero-adapted) (Ba71V).